We begin with the raw amino-acid sequence, 289 residues long: MEIINTIAALRHRLDACRKAGKSIGFVPTMGYLHKGHLTLVEQAKAENAVTVASIFVNPLQFGKGEDLEKYPRDLERDSEMLEAAGVDFLFAPGVADMYPRPMETVVDLPGLGGELEGKARPGHFAGVATVVTKLFNIVQPDAAYFGEKDYQQVAIIRRMVDDLAMPVRVVPVATVREADGLACSSRNVYLTEEQRAAATIVPKALDEAERLYKAGMRDTAEMEAALAAFIAREPQAKPDVVAVRHPDTLATLPHLDQPFLVLLYVQIGTTKLLDNRVITIKSKKEAAE.

An ATP-binding site is contributed by 30-37 (MGYLHKGH). His37 acts as the Proton donor in catalysis. Residue Gln61 coordinates (R)-pantoate. Beta-alanine is bound at residue Gln61. 147 to 150 (GEKD) serves as a coordination point for ATP. Gln153 lines the (R)-pantoate pocket. ATP contacts are provided by residues Val176 and 184–187 (CSSR).

It belongs to the pantothenate synthetase family. Homodimer.

It localises to the cytoplasm. The catalysed reaction is (R)-pantoate + beta-alanine + ATP = (R)-pantothenate + AMP + diphosphate + H(+). The protein operates within cofactor biosynthesis; (R)-pantothenate biosynthesis; (R)-pantothenate from (R)-pantoate and beta-alanine: step 1/1. In terms of biological role, catalyzes the condensation of pantoate with beta-alanine in an ATP-dependent reaction via a pantoyl-adenylate intermediate. The sequence is that of Pantothenate synthetase from Allorhizobium ampelinum (strain ATCC BAA-846 / DSM 112012 / S4) (Agrobacterium vitis (strain S4)).